A 325-amino-acid chain; its full sequence is Probable tRNA-dihydrouridine synthase 2 (325 aa).

18–20 is an FMN binding site; that stretch reads PME. The active-site Proton donor is cysteine 105. FMN is bound by residues lysine 143, 208-210, and 232-233; these read NGD and GR.

It belongs to the Dus family. FMN serves as cofactor.

The catalysed reaction is a 5,6-dihydrouridine in tRNA + NAD(+) = a uridine in tRNA + NADH + H(+). It catalyses the reaction a 5,6-dihydrouridine in tRNA + NADP(+) = a uridine in tRNA + NADPH + H(+). Its function is as follows. Catalyzes the synthesis of 5,6-dihydrouridine (D), a modified base found in the D-loop of most tRNAs, via the reduction of the C5-C6 double bond in target uridines. The protein is Probable tRNA-dihydrouridine synthase 2 (dus2) of Bacillus subtilis (strain 168).